A 149-amino-acid polypeptide reads, in one-letter code: Nucleoside diphosphate kinase (149 aa).

ATP contacts are provided by lysine 9, phenylalanine 57, arginine 85, threonine 91, arginine 102, and asparagine 112. Histidine 115 (pros-phosphohistidine intermediate) is an active-site residue.

This sequence belongs to the NDK family. In terms of assembly, homotetramer. The cofactor is Mg(2+).

It is found in the cytoplasm. The enzyme catalyses a 2'-deoxyribonucleoside 5'-diphosphate + ATP = a 2'-deoxyribonucleoside 5'-triphosphate + ADP. It carries out the reaction a ribonucleoside 5'-diphosphate + ATP = a ribonucleoside 5'-triphosphate + ADP. Major role in the synthesis of nucleoside triphosphates other than ATP. The ATP gamma phosphate is transferred to the NDP beta phosphate via a ping-pong mechanism, using a phosphorylated active-site intermediate. This is Nucleoside diphosphate kinase from Roseiflexus castenholzii (strain DSM 13941 / HLO8).